We begin with the raw amino-acid sequence, 340 residues long: Methionine import ATP-binding protein MetN (340 aa).

The 239-residue stretch at 8–246 (ISVKNLNKEI…PYSSITEELF (239 aa)) folds into the ABC transporter domain. 40–47 (GHSGSGKS) contacts ATP.

Belongs to the ABC transporter superfamily. Methionine importer (TC 3.A.1.24) family. As to quaternary structure, the complex is composed of two ATP-binding proteins (MetN), two transmembrane proteins (MetI) and a solute-binding protein (MetQ).

The protein localises to the cell inner membrane. The enzyme catalyses L-methionine(out) + ATP + H2O = L-methionine(in) + ADP + phosphate + H(+). The catalysed reaction is D-methionine(out) + ATP + H2O = D-methionine(in) + ADP + phosphate + H(+). Part of the ABC transporter complex MetNIQ involved in methionine import. Responsible for energy coupling to the transport system. This is Methionine import ATP-binding protein MetN from Chlamydia felis (strain Fe/C-56) (Chlamydophila felis).